A 500-amino-acid chain; its full sequence is NAD(P)H-quinone oxidoreductase chain 4, chloroplastic (500 aa).

The next 14 membrane-spanning stretches (helical) occupy residues 4–24, 31–51, 84–104, 111–131, 134–154, 167–187, 212–232, 242–262, 272–292, 308–328, 330–350, 386–406, 411–431, and 462–482; these read FPWL…IFFL, VIFW…TYAF, GLSI…TLAA, ARLF…LFSC, LLLF…LLSM, FILY…GIGL, IFYI…PLHT, HYST…YGLV, AHSL…IYAA, SSVS…DIGL, GALL…FLAG, LALP…GLIT, LLMA…LTPI, and LFLS…PDFV.

Belongs to the complex I subunit 4 family.

Its subcellular location is the plastid. It is found in the chloroplast thylakoid membrane. The enzyme catalyses a plastoquinone + NADH + (n+1) H(+)(in) = a plastoquinol + NAD(+) + n H(+)(out). It carries out the reaction a plastoquinone + NADPH + (n+1) H(+)(in) = a plastoquinol + NADP(+) + n H(+)(out). The sequence is that of NAD(P)H-quinone oxidoreductase chain 4, chloroplastic from Jasminum nudiflorum (Winter jasmine).